The following is a 185-amino-acid chain: ATP synthase subunit delta, chloroplastic (185 aa).

It belongs to the ATPase delta chain family. In terms of assembly, F-type ATPases have 2 components, F(1) - the catalytic core - and F(0) - the membrane proton channel. F(1) has five subunits: alpha(3), beta(3), gamma(1), delta(1), epsilon(1). CF(0) has four main subunits: a(1), b(1), b'(1) and c(10-14). The alpha and beta chains form an alternating ring which encloses part of the gamma chain. F(1) is attached to F(0) by a central stalk formed by the gamma and epsilon chains, while a peripheral stalk is formed by the delta, b and b' chains.

Its subcellular location is the plastid. The protein resides in the chloroplast thylakoid membrane. Its function is as follows. F(1)F(0) ATP synthase produces ATP from ADP in the presence of a proton or sodium gradient. F-type ATPases consist of two structural domains, F(1) containing the extramembraneous catalytic core and F(0) containing the membrane proton channel, linked together by a central stalk and a peripheral stalk. During catalysis, ATP synthesis in the catalytic domain of F(1) is coupled via a rotary mechanism of the central stalk subunits to proton translocation. This protein is part of the stalk that links CF(0) to CF(1). It either transmits conformational changes from CF(0) to CF(1) or is implicated in proton conduction. This Guillardia theta (Cryptophyte) protein is ATP synthase subunit delta, chloroplastic.